The following is a 426-amino-acid chain: Selenate reductase subunit C (426 aa).

10 consecutive transmembrane segments (helical) span residues 5 to 25, 40 to 60, 78 to 98, 119 to 139, 187 to 207, 223 to 243, 261 to 281, 302 to 322, 330 to 350, and 385 to 405; these read LYFT…YIRL, WGLW…SFLL, LALF…LIDL, WEIQ…WFLM, ILGI…GSLF, IIFL…LYSF, LLTL…LIGL, FIFW…LITI, MGLA…ILVI, and VGLI…VPVF.

Belongs to the NrfD family. In terms of assembly, the complex is composed of three subunits: SrdA, SrdB and SrdC.

Its subcellular location is the cell membrane. The catalysed reaction is selenite + a quinone + H2O = selenate + a quinol. Its function is as follows. Component of the respiratory selenate reductase complex, which catalyzes the reduction of selenate to selenite. This subunit probably receives electrons directly from the membrane quinone pool and transfers the electrons to the iron-sulfur clusters of SrdB. May be the membrane anchor protein subunit of the complex. The chain is Selenate reductase subunit C from Mesobacillus selenatarsenatis (strain DSM 18680 / JCM 14380 / FERM P-15431 / SF-1).